A 127-amino-acid chain; its full sequence is Large ribosomal subunit protein bL19 (127 aa).

It belongs to the bacterial ribosomal protein bL19 family.

This protein is located at the 30S-50S ribosomal subunit interface and may play a role in the structure and function of the aminoacyl-tRNA binding site. This is Large ribosomal subunit protein bL19 from Myxococcus xanthus (strain DK1622).